The following is a 248-amino-acid chain: 1-(5-phosphoribosyl)-5-[(5-phosphoribosylamino)methylideneamino] imidazole-4-carboxamide isomerase (248 aa).

Asp-8 serves as the catalytic Proton acceptor. Asp-131 (proton donor) is an active-site residue.

It belongs to the HisA/HisF family.

The protein resides in the cytoplasm. It carries out the reaction 1-(5-phospho-beta-D-ribosyl)-5-[(5-phospho-beta-D-ribosylamino)methylideneamino]imidazole-4-carboxamide = 5-[(5-phospho-1-deoxy-D-ribulos-1-ylimino)methylamino]-1-(5-phospho-beta-D-ribosyl)imidazole-4-carboxamide. The protein operates within amino-acid biosynthesis; L-histidine biosynthesis; L-histidine from 5-phospho-alpha-D-ribose 1-diphosphate: step 4/9. In Cupriavidus pinatubonensis (strain JMP 134 / LMG 1197) (Cupriavidus necator (strain JMP 134)), this protein is 1-(5-phosphoribosyl)-5-[(5-phosphoribosylamino)methylideneamino] imidazole-4-carboxamide isomerase.